The primary structure comprises 926 residues: Probable zinc protease PqqL (926 aa).

A Zn(2+)-binding site is contributed by His-79. Glu-82 acts as the Proton acceptor in catalysis. Zn(2+) is bound by residues His-83 and Glu-159.

Belongs to the peptidase M16 family. Zn(2+) serves as cofactor.

This is Probable zinc protease PqqL (pqqL) from Haemophilus influenzae (strain ATCC 51907 / DSM 11121 / KW20 / Rd).